The chain runs to 410 residues: Arginine deiminase (410 aa).

The active-site Amidino-cysteine intermediate is cysteine 399.

This sequence belongs to the arginine deiminase family.

The protein resides in the cytoplasm. The enzyme catalyses L-arginine + H2O = L-citrulline + NH4(+). It participates in amino-acid degradation; L-arginine degradation via ADI pathway; carbamoyl phosphate from L-arginine: step 1/2. In Listeria monocytogenes serovar 1/2a (strain ATCC BAA-679 / EGD-e), this protein is Arginine deiminase.